The chain runs to 244 residues: Isoprenyl transferase (244 aa).

Aspartate 23 is an active-site residue. Mg(2+) is bound at residue aspartate 23. Residues 24–27, tryptophan 28, arginine 36, histidine 40, and 68–70 each bind substrate; these read GNGR and STE. Catalysis depends on asparagine 71, which acts as the Proton acceptor. Substrate contacts are provided by residues tryptophan 72, arginine 74, arginine 191, and 197 to 199; that span reads RMS. Glutamate 210 contributes to the Mg(2+) binding site.

This sequence belongs to the UPP synthase family. As to quaternary structure, homodimer. It depends on Mg(2+) as a cofactor.

Its function is as follows. Catalyzes the condensation of isopentenyl diphosphate (IPP) with allylic pyrophosphates generating different type of terpenoids. This Lactococcus lactis subsp. lactis (strain IL1403) (Streptococcus lactis) protein is Isoprenyl transferase.